The following is a 558-amino-acid chain: Formate--tetrahydrofolate ligase (558 aa).

Position 66 to 73 (66 to 73) interacts with ATP; it reads TPAGEGKT.

It belongs to the formate--tetrahydrofolate ligase family.

The catalysed reaction is (6S)-5,6,7,8-tetrahydrofolate + formate + ATP = (6R)-10-formyltetrahydrofolate + ADP + phosphate. It functions in the pathway one-carbon metabolism; tetrahydrofolate interconversion. In Clostridioides difficile (strain 630) (Peptoclostridium difficile), this protein is Formate--tetrahydrofolate ligase.